The sequence spans 513 residues: Galactose-1-phosphate uridylyltransferase (513 aa).

Belongs to the galactose-1-phosphate uridylyltransferase type 2 family.

It localises to the cytoplasm. It carries out the reaction alpha-D-galactose 1-phosphate + UDP-alpha-D-glucose = alpha-D-glucose 1-phosphate + UDP-alpha-D-galactose. It functions in the pathway carbohydrate metabolism; galactose metabolism. This is Galactose-1-phosphate uridylyltransferase (galT) from Bacillus subtilis (strain 168).